Here is a 368-residue protein sequence, read N- to C-terminus: DNA replication and repair protein RecF (368 aa).

Residue 30 to 37 participates in ATP binding; sequence GNNAQGKT.

Belongs to the RecF family.

Its subcellular location is the cytoplasm. The RecF protein is involved in DNA metabolism; it is required for DNA replication and normal SOS inducibility. RecF binds preferentially to single-stranded, linear DNA. It also seems to bind ATP. The chain is DNA replication and repair protein RecF from Streptococcus pyogenes serotype M6 (strain ATCC BAA-946 / MGAS10394).